The sequence spans 97 residues: uncharacterized protein (97 aa).

A disordered region spans residues 72 to 97 (TVERKRSEHTNSRKKDPSAYTWSDVK). Positions 73-88 (VERKRSEHTNSRKKDP) are enriched in basic and acidic residues.

It belongs to the chlamydial CPn_0121/CT_031/TC_0300 family.

This is an uncharacterized protein from Chlamydia pneumoniae (Chlamydophila pneumoniae).